The following is a 385-amino-acid chain: Probable tRNA sulfurtransferase (385 aa).

Positions 57-160 constitute a THUMP domain; the sequence is DGVIERVKKV…RGNAYVFTDK (104 aa). Residues 180–181, 205–206, Arg-262, Gly-284, and Gln-293 each bind ATP; these read ML and YY.

The protein belongs to the ThiI family.

It localises to the cytoplasm. The enzyme catalyses [ThiI sulfur-carrier protein]-S-sulfanyl-L-cysteine + a uridine in tRNA + 2 reduced [2Fe-2S]-[ferredoxin] + ATP + H(+) = [ThiI sulfur-carrier protein]-L-cysteine + a 4-thiouridine in tRNA + 2 oxidized [2Fe-2S]-[ferredoxin] + AMP + diphosphate. It catalyses the reaction [ThiS sulfur-carrier protein]-C-terminal Gly-Gly-AMP + S-sulfanyl-L-cysteinyl-[cysteine desulfurase] + AH2 = [ThiS sulfur-carrier protein]-C-terminal-Gly-aminoethanethioate + L-cysteinyl-[cysteine desulfurase] + A + AMP + 2 H(+). It functions in the pathway cofactor biosynthesis; thiamine diphosphate biosynthesis. Catalyzes the ATP-dependent transfer of a sulfur to tRNA to produce 4-thiouridine in position 8 of tRNAs, which functions as a near-UV photosensor. Also catalyzes the transfer of sulfur to the sulfur carrier protein ThiS, forming ThiS-thiocarboxylate. This is a step in the synthesis of thiazole, in the thiamine biosynthesis pathway. The sulfur is donated as persulfide by IscS. The protein is Probable tRNA sulfurtransferase of Clostridium perfringens (strain 13 / Type A).